We begin with the raw amino-acid sequence, 690 residues long: MPYLHRSLRPQPQPVPRDARTVHSSGHSFEQLRQSCLQSGTLFEDADFPASNSSLFYSERPQVPFVWKRPGEIVENPEFILGGATRTDICQGELGDCWLLAAIASLTLNQKALARVVPQDQGFGSGYAGIFHFQFWQHSEWLDVVIDDRLPTFRDRLVFLHSADHNEFWSALLEKAYAKLNGSYEALKGGSAIEAMEDFTGGVAENFQIREAPEDFYEILEKALRRGSLLGCSIDTLNASESEARTPLGLIKGHAYTVTGLDQVNFHGQRIKLIRVRNPWGQVEWNGPWSDSSPEWRSMSLEEQKRLGHTALDDGEFWMAFEDFKTHFDKVEICNLTPDALEDNTLHKWEVTIHQGSWVRGSTAGGCRNFLDTFWTNPQIKLSLTERDEGQEGCTFLAALMQKDRRRLKRFGANMLTIGYAIYQCPDKDGHLNRDFFRYHASLARSKTFINLREVSGRFQLPPGDYILIPSTFEPHQEADFCLRIFSEKKAVTQDLDENIDIDLPELPKPTPQEEETEEERQFRALFRRIAGEDMEVSAEELEYVLNAVLQKKTALKFKRLSLLSCRNIISLMDTSGNGKMEFEEFRVFWDKLRYWMDLFLQFDVDKSGTMSSYELRTALKAAGFQLGSHLLQLIVLRYADENLQLDFDDYLNCLVRLENASRVFQCLSVKNKDFIHLNINEFINLTMNI.

A disordered region spans residues Met1–Ser24. Residues Leu42–Thr337 enclose the Calpain catalytic domain. Ca(2+) is bound by residues Leu81, Gly83, and Asp88. Cys97 is an active-site residue. Glu167 contributes to the Ca(2+) binding site. Active-site residues include His254 and Asn278. Ca(2+) contacts are provided by Glu284, Asp291, Leu312, Asp314, and Glu316. Residues Pro338–Arg521 form a domain III region. Residues Gln522–Ile690 form a domain IV region. EF-hand domains follow at residues Asp534–Lys552, Leu561–Phe589, and Asp591–Gln626. Asp574, Ser576, Asn578, Lys580, Glu585, Asp604, Asp606, Ser608, Thr610, and Glu615 together coordinate Ca(2+).

It belongs to the peptidase C2 family. As to expression, predominantly expressed in stomach and small intestine, although low levels of expression in other organs.

In terms of biological role, calcium-regulated non-lysosomal thiol-protease. The polypeptide is Calpain-9 (Capn9) (Rattus norvegicus (Rat)).